The primary structure comprises 172 residues: Peptide methionine sulfoxide reductase MsrA 1 (172 aa).

Cysteine 14 is an active-site residue.

This sequence belongs to the MsrA Met sulfoxide reductase family.

It carries out the reaction L-methionyl-[protein] + [thioredoxin]-disulfide + H2O = L-methionyl-(S)-S-oxide-[protein] + [thioredoxin]-dithiol. It catalyses the reaction [thioredoxin]-disulfide + L-methionine + H2O = L-methionine (S)-S-oxide + [thioredoxin]-dithiol. Its function is as follows. Has an important function as a repair enzyme for proteins that have been inactivated by oxidation. Catalyzes the reversible oxidation-reduction of methionine sulfoxide in proteins to methionine. In Mesorhizobium japonicum (strain LMG 29417 / CECT 9101 / MAFF 303099) (Mesorhizobium loti (strain MAFF 303099)), this protein is Peptide methionine sulfoxide reductase MsrA 1 (msrA1).